A 521-amino-acid polypeptide reads, in one-letter code: MEFPEHSRHLLQCLSEQRHQGFLCDCTVLVGDAHFRAHRAVLASCSMYFHLFYKDQLDKRDIVHLNSDIVTAPAFALLLEFMYEGKLQFKDLPIEDVLAAASYLHMYDIVKVCKKKLKEKATTEADSTKKEEDASSCSDKIECLSDGSSHMAGDLPSDEDDVEEEKINILPGKTDLATESGNMWIRLPSDSASIPQTGGEAETHTAAAGKTADSPCSSTGSLSHRSATSMRDSADVDCVLDLSVKSSLSGAETLNNSYLSSQEILRNSLVQVKVEKEASCDENDIDTTEYDIERNTVKESSSSNIRAPYEPVHLAPIREDSVLRELDHDDKASDDDITPENERVQMETNMDSSLLPYVPNILSPAGQIFMCPLCNKVFPSPHILQIHLSTHFREQEGIRSKPANDVHVPTCSLCGKTFSCMYTLKRHERTHSGEKPFTCTQCGKSFQYSHNLSRHAVVHTREKPHACKWCERRFTQSGDLYRHIRKFHCELVNSLSVKSETLGLPAVRDWTLEDSSQELWK.

Positions Cys-24 to Asp-91 constitute a BTB domain. Positions Asp-190–Met-230 are disordered. Positions Thr-197 to Ala-212 are enriched in low complexity. Residues Ser-214–Met-230 are compositionally biased toward polar residues. 4 consecutive C2H2-type zinc fingers follow at residues Phe-369–His-391, Pro-409–His-431, Phe-437–His-459, and His-465–His-488.

Belongs to the krueppel C2H2-type zinc-finger protein family. ZBTB18 subfamily.

It localises to the nucleus. Its function is as follows. Transcriptional repressor that plays a role in various developmental processes. Specifically binds the consensus DNA sequence 5'-[AC]ACATCTG[GT][AC]-3' which contains the E box core, and acts by recruiting chromatin remodeling multiprotein complexes. The chain is Zinc finger and BTB domain-containing protein 18 (zbtb18) from Xenopus tropicalis (Western clawed frog).